The following is a 129-amino-acid chain: NADPH-dependent 7-cyano-7-deazaguanine reductase (129 aa).

C34 functions as the Thioimide intermediate in the catalytic mechanism. D41 (proton donor) is an active-site residue. Substrate contacts are provided by residues V56 to L58 and H75 to E76.

It belongs to the GTP cyclohydrolase I family. QueF type 1 subfamily.

It is found in the cytoplasm. The enzyme catalyses 7-aminomethyl-7-carbaguanine + 2 NADP(+) = 7-cyano-7-deazaguanine + 2 NADPH + 3 H(+). The protein operates within tRNA modification; tRNA-queuosine biosynthesis. Functionally, catalyzes the NADPH-dependent reduction of 7-cyano-7-deazaguanine (preQ0) to 7-aminomethyl-7-deazaguanine (preQ1). The sequence is that of NADPH-dependent 7-cyano-7-deazaguanine reductase from Thioalkalivibrio sulfidiphilus (strain HL-EbGR7).